Reading from the N-terminus, the 332-residue chain is MFPARRGLHTTSRACARTRFTKPKPKPAKRENVRLPTQRTHHDNDLKITAPIPPAAANLTCPDDHPLWQFFSEKKFLRTPEELDTLSRPWTIPELRRKSFTDLHSLWYTCLKERNVLARENHLVQFNFEAQTEAYQDISEKIRTTMWRIRHVLSERDWAFKIANEKFAVEKQVFIESFEKDFLEAPANEDEEIFESLQRFQYAIYGISEYIDENKVDRTFVDGLKAVATLKLKKFALRNEDIKNFLEESNNTIVDAGESFLLYTSENTESAIAEACQAVRELRENGSSVSRYDELETVQEYVNKLAEAQMAKVTEAEIQLQEEDAKNNANTL.

The disordered stretch occupies residues 19-40; sequence RFTKPKPKPAKRENVRLPTQRT. A coiled-coil region spans residues 264–327; sequence TSENTESAIA…IQLQEEDAKN (64 aa).

This sequence belongs to the universal ribosomal protein uL29 family. As to quaternary structure, component of the mitochondrial large ribosomal subunit. Mature mitochondrial ribosomes consist of a small (37S) and a large (54S) subunit. The 37S subunit contains at least 33 different proteins and 1 molecule of RNA (15S). The 54S subunit contains at least 45 different proteins and 1 molecule of RNA (21S).

Its subcellular location is the mitochondrion. In Kluyveromyces lactis (strain ATCC 8585 / CBS 2359 / DSM 70799 / NBRC 1267 / NRRL Y-1140 / WM37) (Yeast), this protein is Large ribosomal subunit protein uL29m (MRPL4).